The sequence spans 74 residues: DNA-directed RNA polymerase subunit omega (74 aa).

It belongs to the RNA polymerase subunit omega family. The RNAP catalytic core consists of 2 alpha, 1 beta, 1 beta' and 1 omega subunit. When a sigma factor is associated with the core the holoenzyme is formed, which can initiate transcription.

It carries out the reaction RNA(n) + a ribonucleoside 5'-triphosphate = RNA(n+1) + diphosphate. Functionally, promotes RNA polymerase assembly. Latches the N- and C-terminal regions of the beta' subunit thereby facilitating its interaction with the beta and alpha subunits. This Marinomonas sp. (strain MWYL1) protein is DNA-directed RNA polymerase subunit omega.